Here is a 393-residue protein sequence, read N- to C-terminus: NAD(P)H-quinone oxidoreductase subunit H, chloroplastic (393 aa).

The protein belongs to the complex I 49 kDa subunit family. In terms of assembly, NDH is composed of at least 16 different subunits, 5 of which are encoded in the nucleus.

It localises to the plastid. The protein resides in the chloroplast thylakoid membrane. The catalysed reaction is a plastoquinone + NADH + (n+1) H(+)(in) = a plastoquinol + NAD(+) + n H(+)(out). It carries out the reaction a plastoquinone + NADPH + (n+1) H(+)(in) = a plastoquinol + NADP(+) + n H(+)(out). NDH shuttles electrons from NAD(P)H:plastoquinone, via FMN and iron-sulfur (Fe-S) centers, to quinones in the photosynthetic chain and possibly in a chloroplast respiratory chain. The immediate electron acceptor for the enzyme in this species is believed to be plastoquinone. Couples the redox reaction to proton translocation, and thus conserves the redox energy in a proton gradient. In Cryptomeria japonica (Japanese cedar), this protein is NAD(P)H-quinone oxidoreductase subunit H, chloroplastic.